We begin with the raw amino-acid sequence, 289 residues long: Aquaporin PIP1-2 (289 aa).

The tract at residues 1–36 is disordered; that stretch reads MEGKEEDVRLGANKFSERQPIGTAAQGAADDKDYKE. 2 helical membrane-spanning segments follow: residues 58 to 78 and 93 to 115; these read IAEF…VMGV and IAWS…SGGH. The NPA 1 motif lies at 117–119; the sequence is NPA. Transmembrane regions (helical) follow at residues 136 to 156, 178 to 198, and 212 to 232; these read LFYI…VKGF, GDGL…VFSA, and ILAP…TIPI. The NPA 2 motif lies at 238–240; it reads NPA. Residues 260 to 280 form a helical membrane-spanning segment; it reads IFWVGPFIGAALAAIYHQVII.

This sequence belongs to the MIP/aquaporin (TC 1.A.8) family. PIP (TC 1.A.8.11) subfamily. As to quaternary structure, interacts with PIP2-1 to form heteromers. Highly expressed in developing tassels and at lower levels in roots, shoots, ears and embryos. Expressed in the root growing zone at 5-6 mm from the root tip. Expressed in xylem parenchyma.

The protein resides in the cell membrane. In terms of biological role, water channel required to facilitate the transport of water across cell membrane. Active as heteromers with PIP1-1, PIP2-1, PIP2-4 or PIP2-5, but not as homomers. This Zea mays (Maize) protein is Aquaporin PIP1-2 (PIP1-2).